The sequence spans 511 residues: MKDNKIIIFDTTLRDGEQALGSSLGINQKLQIALALENLGVDVIEAGFPVSSQGDFKAVQKIASKVKNSTICALSRALDKDIDMAYEALKVAKHFRIHTFIATSTLHMQDKLKKDFDEILSMAKRAIIRARSYTDDVEFSCEDAGRTPIDNLCFMVENAIKAGAKTINIPDTVGYTLPSEFANIIKILFNKVPNIDKAIISVHCHNDLGMATGNSLSAILQGARQIECTINGLGERAGNCALEEVVMAIKTRKDYLKGFYTDIKCENIFKTSKLVSAITNESIPSHKAIVGSNAFSHSSGIHQDGVLKNRQTYEIISPSAIGIHDNRMLMTARSGRAMIKTCLENLGYDENTYNLDDVYERFLRLADKKGQVYDYDLEALMFLSYENEEENEFVIEKLSVISGNIPTACVCMRIKEELKTEACTGNGPVEAVFNCIARITNLKPVLKAYSINAKSSGVDAQGQVDVDLEFKGRKFHGKGLSTDVIEASAQAFASAYNAIYRSLKVEERKMA.

Positions 6-269 (IIIFDTTLRD…YTDIKCENIF (264 aa)) constitute a Pyruvate carboxyltransferase domain. 4 residues coordinate Mn(2+): Asp15, His203, His205, and Asn239. A regulatory domain region spans residues 394-511 (VIEKLSVISG…SLKVEERKMA (118 aa)).

The protein belongs to the alpha-IPM synthase/homocitrate synthase family. LeuA type 1 subfamily. Homodimer. Mn(2+) serves as cofactor.

It localises to the cytoplasm. The enzyme catalyses 3-methyl-2-oxobutanoate + acetyl-CoA + H2O = (2S)-2-isopropylmalate + CoA + H(+). The protein operates within amino-acid biosynthesis; L-leucine biosynthesis; L-leucine from 3-methyl-2-oxobutanoate: step 1/4. Catalyzes the condensation of the acetyl group of acetyl-CoA with 3-methyl-2-oxobutanoate (2-ketoisovalerate) to form 3-carboxy-3-hydroxy-4-methylpentanoate (2-isopropylmalate). The polypeptide is 2-isopropylmalate synthase (Campylobacter jejuni (strain RM1221)).